A 271-amino-acid chain; its full sequence is 5-deoxy-glucuronate isomerase (271 aa).

Belongs to the isomerase IolB family.

The enzyme catalyses 5-deoxy-D-glucuronate = 5-dehydro-2-deoxy-D-gluconate. Its pathway is polyol metabolism; myo-inositol degradation into acetyl-CoA; acetyl-CoA from myo-inositol: step 4/7. Its function is as follows. Involved in the isomerization of 5-deoxy-glucuronate (5DG) to 5-dehydro-2-deoxy-D-gluconate (DKG or 2-deoxy-5-keto-D-gluconate). This chain is 5-deoxy-glucuronate isomerase, found in Bacillus licheniformis (strain ATCC 14580 / DSM 13 / JCM 2505 / CCUG 7422 / NBRC 12200 / NCIMB 9375 / NCTC 10341 / NRRL NRS-1264 / Gibson 46).